A 211-amino-acid chain; its full sequence is Ribonuclease HII (211 aa).

The region spanning 1-205 (MRFGVDEAGK…CDDVLAAASQ (205 aa)) is the RNase H type-2 domain. 3 residues coordinate a divalent metal cation: D6, E7, and D100.

The protein belongs to the RNase HII family. It depends on Mn(2+) as a cofactor. The cofactor is Mg(2+).

The protein localises to the cytoplasm. The catalysed reaction is Endonucleolytic cleavage to 5'-phosphomonoester.. Functionally, endonuclease that specifically degrades the RNA of RNA-DNA hybrids. The sequence is that of Ribonuclease HII from Haloarcula marismortui (strain ATCC 43049 / DSM 3752 / JCM 8966 / VKM B-1809) (Halobacterium marismortui).